Consider the following 43-residue polypeptide: Seed non-specific lipid transfer protein-like (43 aa).

This sequence belongs to the plant LTP family. Homodimer.

Plant non-specific lipid-transfer proteins transfer phospholipids as well as galactolipids across membranes. May play a role in wax or cutin deposition in the cell walls of expanding epidermal cells and certain secretory tissues. This isoform inhibits the hyphal growth of several fungi in vitro. The sequence is that of Seed non-specific lipid transfer protein-like from Raphanus sativus (Radish).